Consider the following 599-residue polypeptide: Aspartate--tRNA(Asp/Asn) ligase (599 aa).

E173 contributes to the L-aspartate binding site. Residues 197 to 200 (QLFK) form an aspartate region. Residue R219 coordinates L-aspartate. Residues 219–221 (RDE) and Q228 contribute to the ATP site. H449 serves as a coordination point for L-aspartate. An ATP-binding site is contributed by E482. R489 is a binding site for L-aspartate. ATP is bound at residue 534–537 (GLDR).

This sequence belongs to the class-II aminoacyl-tRNA synthetase family. Type 1 subfamily. As to quaternary structure, homodimer.

It is found in the cytoplasm. It carries out the reaction tRNA(Asx) + L-aspartate + ATP = L-aspartyl-tRNA(Asx) + AMP + diphosphate. Its function is as follows. Aspartyl-tRNA synthetase with relaxed tRNA specificity since it is able to aspartylate not only its cognate tRNA(Asp) but also tRNA(Asn). Reaction proceeds in two steps: L-aspartate is first activated by ATP to form Asp-AMP and then transferred to the acceptor end of tRNA(Asp/Asn). In Marinobacter nauticus (strain ATCC 700491 / DSM 11845 / VT8) (Marinobacter aquaeolei), this protein is Aspartate--tRNA(Asp/Asn) ligase.